Reading from the N-terminus, the 186-residue chain is Ribosome-recycling factor (186 aa).

It belongs to the RRF family.

The protein localises to the cytoplasm. Its function is as follows. Responsible for the release of ribosomes from messenger RNA at the termination of protein biosynthesis. May increase the efficiency of translation by recycling ribosomes from one round of translation to another. This chain is Ribosome-recycling factor, found in Cupriavidus necator (strain ATCC 17699 / DSM 428 / KCTC 22496 / NCIMB 10442 / H16 / Stanier 337) (Ralstonia eutropha).